Reading from the N-terminus, the 420-residue chain is 2',3'-cyclic-nucleotide 3'-phosphodiesterase (420 aa).

S9 is modified (phosphoserine). Phosphotyrosine is present on Y110. S169, S227, and S239 each carry phosphoserine. Residue H250 is the Proton acceptor of the active site. Residue T252 coordinates substrate. H329 (proton donor) is an active-site residue. T331 lines the substrate pocket. Position 358 is a phosphoserine (S358). Position 417 is a cysteine methyl ester (C417). C417 is lipidated: S-farnesyl cysteine. Residues 418–420 (TII) constitute a propeptide, removed in mature form.

Belongs to the 2H phosphoesterase superfamily. CNPase family. In terms of assembly, exists as monomers and homodimers.

It localises to the membrane. It is found in the melanosome. The catalysed reaction is a nucleoside 2',3'-cyclic phosphate + H2O = a nucleoside 2'-phosphate + H(+). Functionally, catalyzes the formation of 2'-nucleotide products from 2',3'-cyclic substrates. May participate in RNA metabolism in the myelinating cell, CNP is the third most abundant protein in central nervous system myelin. This is 2',3'-cyclic-nucleotide 3'-phosphodiesterase from Mus musculus (Mouse).